A 267-amino-acid polypeptide reads, in one-letter code: Electron transfer flavoprotein subunit beta (267 aa).

It belongs to the ETF beta-subunit/FixA family. As to quaternary structure, heterodimer of an alpha and a beta subunit.

Participates in the electron transfer process during N,N-dimethylglycine (DMG) degradation to sarcosine. The protein is Electron transfer flavoprotein subunit beta of Chromohalobacter salexigens (strain ATCC BAA-138 / DSM 3043 / CIP 106854 / NCIMB 13768 / 1H11).